We begin with the raw amino-acid sequence, 494 residues long: Alpha-amylase-related protein (494 aa).

An N-terminal signal peptide occupies residues methionine 1 to alanine 20. Pyrrolidone carboxylic acid is present on glutamine 21. Cysteine 48 and cysteine 104 are disulfide-bonded. Ca(2+) contacts are provided by asparagine 118, glutamine 169, and aspartate 178. Cysteines 157 and 171 form a disulfide. Arginine 206 provides a ligand contact to chloride. Aspartate 208 (nucleophile) is an active-site residue. Histidine 212 contacts Ca(2+). Glutamate 245 serves as the catalytic Proton donor. Residues asparagine 308 and arginine 343 each contribute to the chloride site. 3 cysteine pairs are disulfide-bonded: cysteine 376/cysteine 382, cysteine 418/cysteine 441, and cysteine 448/cysteine 460.

This sequence belongs to the glycosyl hydrolase 13 family. As to quaternary structure, monomer. The cofactor is Ca(2+). Chloride serves as cofactor.

The protein resides in the secreted. It carries out the reaction Endohydrolysis of (1-&gt;4)-alpha-D-glucosidic linkages in polysaccharides containing three or more (1-&gt;4)-alpha-linked D-glucose units.. The chain is Alpha-amylase-related protein (Amyrel) from Drosophila pseudoobscura pseudoobscura (Fruit fly).